The chain runs to 276 residues: Orotidine 5'-phosphate decarboxylase (276 aa).

The Proton donor role is filled by Lys-93.

This sequence belongs to the OMP decarboxylase family. Type 2 subfamily.

It carries out the reaction orotidine 5'-phosphate + H(+) = UMP + CO2. It participates in pyrimidine metabolism; UMP biosynthesis via de novo pathway; UMP from orotate: step 2/2. This Halorubrum lacusprofundi (strain ATCC 49239 / DSM 5036 / JCM 8891 / ACAM 34) protein is Orotidine 5'-phosphate decarboxylase.